The primary structure comprises 346 residues: Glycerol-1-phosphate dehydrogenase [NAD(P)+] (346 aa).

Residues 93–97 and 115–118 contribute to the NAD(+) site; these read GSIID and TTAS. Residue aspartate 120 participates in substrate binding. Residue serine 124 participates in NAD(+) binding. Aspartate 167 serves as a coordination point for substrate. 2 residues coordinate Zn(2+): aspartate 167 and histidine 247. Histidine 251 provides a ligand contact to substrate. Histidine 263 contributes to the Zn(2+) binding site.

Belongs to the glycerol-1-phosphate dehydrogenase family. Requires Zn(2+) as cofactor.

It is found in the cytoplasm. The enzyme catalyses sn-glycerol 1-phosphate + NAD(+) = dihydroxyacetone phosphate + NADH + H(+). It catalyses the reaction sn-glycerol 1-phosphate + NADP(+) = dihydroxyacetone phosphate + NADPH + H(+). Its pathway is membrane lipid metabolism; glycerophospholipid metabolism. In terms of biological role, catalyzes the NAD(P)H-dependent reduction of dihydroxyacetonephosphate (DHAP or glycerone phosphate) to glycerol 1-phosphate (G1P). The G1P thus generated is used as the glycerophosphate backbone of phospholipids in the cellular membranes of Archaea. This chain is Glycerol-1-phosphate dehydrogenase [NAD(P)+], found in Pyrococcus abyssi (strain GE5 / Orsay).